The chain runs to 722 residues: Formin-like protein 16 (722 aa).

4 disordered regions span residues 1-56, 564-606, 635-672, and 690-722; these read MSPV…PMFD, ATED…PSRP, VGSPSPPPPSMSGGAPPPPPPPPMLVASRTAPPPHLSH, and PLLVREGAPPPTLPSMSGGAPPPPPPLPMLRYQ. Positions 22–55 are enriched in pro residues; the sequence is PLPPPPPPPMRRSAPSPPPMSGRVPPPPPPPPMF. The region spanning 182–571 is the FH2 domain; sequence FRCPVTKRSS…KAATEDVFGG (390 aa). Pro residues-rich tracts occupy residues 593 to 605, 638 to 658, and 709 to 722; these read IRPPPSIPRPPSR, PSPPPPSMSGGAPPPPPPPPM, and APPPPPPLPMLRYQ.

It belongs to the formin-like family. Class-II subfamily.

This is Formin-like protein 16 (FH16) from Arabidopsis thaliana (Mouse-ear cress).